The primary structure comprises 669 residues: L-type lectin-domain containing receptor kinase V.9 (669 aa).

An N-terminal signal peptide occupies residues 1–21; that stretch reads MKFFVLVLLLVLQFFSNKALS. At 22 to 286 the chain is on the extracellular side; it reads QSEEGEFGFN…RDSRSTSVKK (265 aa). The tract at residues 38-259 is legume-lectin like; it reads SGIAITNSKG…SHYILGWTFK (222 aa). Asn-53, Asn-75, Asn-124, Asn-206, and Asn-261 each carry an N-linked (GlcNAc...) asparagine glycan. The helical transmembrane segment at 287 to 307 threads the bilayer; sequence ILAISLSLTSLAILVFLTISY. Residues 308–669 lie on the Cytoplasmic side of the membrane; the sequence is MLFLKRKKLM…FTEPFVSHGR (362 aa). Residues 344-603 form the Protein kinase domain; the sequence is FRNSELLGKG…LGLFCSHPVA (260 aa). ATP contacts are provided by residues 350 to 358 and Lys-373; that span reads LGKGGFGKV. Asp-469 acts as the Proton acceptor in catalysis.

This sequence in the C-terminal section; belongs to the protein kinase superfamily. Ser/Thr protein kinase family. In the N-terminal section; belongs to the leguminous lectin family.

The protein resides in the cell membrane. It carries out the reaction L-seryl-[protein] + ATP = O-phospho-L-seryl-[protein] + ADP + H(+). The catalysed reaction is L-threonyl-[protein] + ATP = O-phospho-L-threonyl-[protein] + ADP + H(+). The polypeptide is L-type lectin-domain containing receptor kinase V.9 (LECRK59) (Arabidopsis thaliana (Mouse-ear cress)).